The primary structure comprises 1411 residues: Regulating synaptic membrane exocytosis protein 2 (1411 aa).

Positions 1-33 (MSAPVGPRGRLAPIPAASQPPLQPEMPDLSHLT) are disordered. A RabBD domain is found at 26–185 (MPDLSHLTEE…TKSGAWFYNS (160 aa)). The FYVE-type zinc finger occupies 117-173 (KGDAPTCGICHKTKFADGCGHNCSYCQTKFCARCGGRVSLRSNKVMWVCNLCRKQQE). Cys-123, Cys-126, Cys-139, Cys-142, Cys-147, Cys-150, Cys-165, and Cys-168 together coordinate Zn(2+). 6 stretches are compositionally biased toward basic and acidic residues: residues 203–216 (NEEAPQEKKPKLHE), 273–287 (DQNRRYDQREEREEY), 318–329 (DSDHLSYRDSNR), 348–366 (RDEYERQRREEEYQSRYRS), 382–401 (EQMRIHAEVSRARHERRHSD), and 410–434 (EDSRISMLRMDRPSRQRSISERRAA). 2 disordered regions span residues 203–598 (NEEA…SERQ) and 623–650 (SGVDTCSSTTLNEEHSHSDKHPVTWQPS). Position 400 is a phosphoserine (Ser-400). Residues 451–463 (GPSSYAQRTTNHS) are compositionally biased toward polar residues. Residues 475–492 (DRPDLRRTDSLRKQHHLD) are compositionally biased toward basic and acidic residues. Polar residues predominate over residues 510 to 521 (RNDSLSSDQSES). Residues 528–537 (KPHKSKKGGK) show a composition bias toward basic residues. Residues 558–568 (SCDDVEIESES) are compositionally biased toward acidic residues. 2 stretches are compositionally biased toward basic and acidic residues: residues 569–583 (VSEKGDSQKGKRKTS) and 634–644 (NEEHSHSDKHP). One can recognise a PDZ domain in the interval 668 to 754 (DGSVPRDSGA…EPQVELVVSR (87 aa)). At Thr-689 the chain carries Phosphothreonine. Positions 762–793 (IPDSTHAQLESSSSSFESQKMDRPSISVTSPM) are disordered. Phosphoserine is present on residues Ser-791 and Ser-794. The C2 1 domain occupies 805 to 928 (LSGQLSIKLW…ALLDDEPHWY (124 aa)). Disordered regions lie at residues 939–973 (PLPHPSPYMPRRQLHGESPTRRLQRSKRISDSEVS) and 993–1190 (DLQS…STET). Composition is skewed to polar residues over residues 994–1015 (LQSSTLSVPEQVMSSNHCSPSG) and 1049–1059 (RTMTGHYNTIS). The segment covering 1060–1113 (RMDRHRVMDDHYSPDRDRDCEAADRQPYHRSRSTEQRPLLERTTTRSRSTERPD) has biased composition (basic and acidic residues). Residues 1143–1153 (GSVQTSPSSTP) show a composition bias toward polar residues. At Ser-1148 the chain carries Phosphoserine. The C2 2 domain maps to 1257–1375 (AMGDIQVGMM…ELSNMVIGWF (119 aa)). Phosphoserine is present on residues Ser-1396 and Ser-1399.

As to quaternary structure, interacts with RAB3A and RAB3B that have been activated by GTP-binding. Interacts with RAB3C, RAB3D and RAB26. Interacts with TSPOAP1 and RIMBP2. Interacts with PPFIA3 and PPFIA4. Interacts via its zinc finger with the first C2 domain of UNC13A. Forms a complex consisting of UNC13A, RIMS2 and RAB3A. Heterodimer with PCLO. Part of a ternary complex involving PCLO and EPAC2. As to expression, widely expressed. Expressed in melanocytes. In fetal tissues, predominantly expressed in the brain. In the retina, expressed in the outer plexiform layer (at protein level). In the cerebellum, expressed in Purkinje cells (at protein level). In the pancreas, expressed in Langerhans islets (at protein level).

The protein resides in the cell membrane. It localises to the synapse. The protein localises to the presynaptic cell membrane. Functionally, rab effector involved in exocytosis. May act as scaffold protein. Plays a role in dendrite formation by melanocytes. This Homo sapiens (Human) protein is Regulating synaptic membrane exocytosis protein 2 (RIMS2).